A 527-amino-acid polypeptide reads, in one-letter code: Glucose-6-phosphate isomerase (527 aa).

Glu323 acts as the Proton donor in catalysis. Residues His352 and Lys454 contribute to the active site.

The protein belongs to the GPI family.

It localises to the cytoplasm. It catalyses the reaction alpha-D-glucose 6-phosphate = beta-D-fructose 6-phosphate. Its pathway is carbohydrate biosynthesis; gluconeogenesis. It functions in the pathway carbohydrate degradation; glycolysis; D-glyceraldehyde 3-phosphate and glycerone phosphate from D-glucose: step 2/4. Its function is as follows. Catalyzes the reversible isomerization of glucose-6-phosphate to fructose-6-phosphate. This chain is Glucose-6-phosphate isomerase, found in Prochlorococcus marinus (strain MIT 9215).